Consider the following 143-residue polypeptide: Large ribosomal subunit protein uL11 (143 aa).

This sequence belongs to the universal ribosomal protein uL11 family. In terms of assembly, part of the ribosomal stalk of the 50S ribosomal subunit. Interacts with L10 and the large rRNA to form the base of the stalk. L10 forms an elongated spine to which L12 dimers bind in a sequential fashion forming a multimeric L10(L12)X complex. Post-translationally, one or more lysine residues are methylated.

Its function is as follows. Forms part of the ribosomal stalk which helps the ribosome interact with GTP-bound translation factors. The sequence is that of Large ribosomal subunit protein uL11 from Rhizorhabdus wittichii (strain DSM 6014 / CCUG 31198 / JCM 15750 / NBRC 105917 / EY 4224 / RW1) (Sphingomonas wittichii).